Reading from the N-terminus, the 124-residue chain is Histone H2A (124 aa).

Positions Met1–Ser18 are enriched in basic residues. The segment at Met1 to Leu23 is disordered. Ser2 carries the N-acetylserine modification. A Phosphoserine modification is found at Ser2. The residue at position 104 (Gln104) is an N5-methylglutamine.

The protein belongs to the histone H2A family. In terms of assembly, the nucleosome is a histone octamer containing two molecules each of H2A, H2B, H3 and H4 assembled in one H3-H4 heterotetramer and two H2A-H2B heterodimers. The octamer wraps approximately 147 bp of DNA. Post-translationally, phosphorylation of Ser-2 directly represses transcription.

Its subcellular location is the nucleus. The protein resides in the chromosome. Core component of nucleosome. Nucleosomes wrap and compact DNA into chromatin, limiting DNA accessibility to the cellular machineries which require DNA as a template. Histones thereby play a central role in transcription regulation, DNA repair, DNA replication and chromosomal stability. DNA accessibility is regulated via a complex set of post-translational modifications of histones, also called histone code, and nucleosome remodeling. This Platynereis dumerilii (Dumeril's clam worm) protein is Histone H2A.